Reading from the N-terminus, the 150-residue chain is Cytochrome c oxidase subunit 5A, mitochondrial (150 aa).

Residues 1–41 constitute a mitochondrion transit peptide; it reads MLGAALRRCAVAAAARAGPRGLLHSAPTPGPAAAIQSVRCY. Positions 2–17 match the SIFI-degron motif; the sequence is LGAALRRCAVAAAARA. 2 positions are modified to N6-acetyllysine: K87 and K113. T141 carries the phosphothreonine modification.

Belongs to the cytochrome c oxidase subunit 5A family. Component of the cytochrome c oxidase (complex IV, CIV), a multisubunit enzyme composed of 14 subunits. The complex is composed of a catalytic core of 3 subunits MT-CO1, MT-CO2 and MT-CO3, encoded in the mitochondrial DNA, and 11 supernumerary subunits COX4I, COX5A, COX5B, COX6A, COX6B, COX6C, COX7A, COX7B, COX7C, COX8 and NDUFA4, which are encoded in the nuclear genome. The complex exists as a monomer or a dimer and forms supercomplexes (SCs) in the inner mitochondrial membrane with NADH-ubiquinone oxidoreductase (complex I, CI) and ubiquinol-cytochrome c oxidoreductase (cytochrome b-c1 complex, complex III, CIII), resulting in different assemblies (supercomplex SCI(1)III(2)IV(1) and megacomplex MCI(2)III(2)IV(2)). Interacts with AFG1L. Interacts with RAB5IF. In response to mitochondrial stress, the precursor protein is ubiquitinated by the SIFI complex in the cytoplasm before mitochondrial import, leading to its degradation. Within the SIFI complex, UBR4 initiates ubiquitin chain that are further elongated or branched by KCMF1.

It is found in the mitochondrion inner membrane. Its pathway is energy metabolism; oxidative phosphorylation. Component of the cytochrome c oxidase, the last enzyme in the mitochondrial electron transport chain which drives oxidative phosphorylation. The respiratory chain contains 3 multisubunit complexes succinate dehydrogenase (complex II, CII), ubiquinol-cytochrome c oxidoreductase (cytochrome b-c1 complex, complex III, CIII) and cytochrome c oxidase (complex IV, CIV), that cooperate to transfer electrons derived from NADH and succinate to molecular oxygen, creating an electrochemical gradient over the inner membrane that drives transmembrane transport and the ATP synthase. Cytochrome c oxidase is the component of the respiratory chain that catalyzes the reduction of oxygen to water. Electrons originating from reduced cytochrome c in the intermembrane space (IMS) are transferred via the dinuclear copper A center (CU(A)) of subunit 2 and heme A of subunit 1 to the active site in subunit 1, a binuclear center (BNC) formed by heme A3 and copper B (CU(B)). The BNC reduces molecular oxygen to 2 water molecules using 4 electrons from cytochrome c in the IMS and 4 protons from the mitochondrial matrix. In Plecturocebus donacophilus (Bolivian gray titi monkey), this protein is Cytochrome c oxidase subunit 5A, mitochondrial (COX5A).